Consider the following 496-residue polypeptide: Cytochrome c-552 (496 aa).

The first 23 residues, methionine 1–alanine 23, serve as a signal peptide directing secretion. Heme c is bound at residue histidine 100. The heme site is built by cysteine 128, cysteine 131, and lysine 132. Residues cysteine 166, cysteine 169, histidine 170, cysteine 210, cysteine 213, and histidine 214 each contribute to the heme c site. Ca(2+)-binding residues include glutamate 216, tyrosine 217, lysine 269, and glutamine 271. Tyrosine 217 serves as a coordination point for substrate. Histidine 272 serves as a coordination point for substrate. Residues histidine 283, cysteine 290, cysteine 293, histidine 294, histidine 308, cysteine 321, cysteine 324, histidine 325, and histidine 400 each contribute to the heme c site.

The protein belongs to the cytochrome c-552 family. Ca(2+) is required as a cofactor. The cofactor is heme c.

It localises to the periplasm. The catalysed reaction is 6 Fe(III)-[cytochrome c] + NH4(+) + 2 H2O = 6 Fe(II)-[cytochrome c] + nitrite + 8 H(+). Its pathway is nitrogen metabolism; nitrate reduction (assimilation). In terms of biological role, catalyzes the reduction of nitrite to ammonia, consuming six electrons in the process. The protein is Cytochrome c-552 of Aliarcobacter butzleri (strain RM4018) (Arcobacter butzleri).